The chain runs to 257 residues: Probable amino-acid ABC transporter ATP-binding protein HI_1078 (257 aa).

The ABC transporter domain maps to 4-244; sequence LKVSNIQKNF…PQHERTKQFL (241 aa). 36 to 43 is a binding site for ATP; that stretch reads GPSGSGKT.

The protein belongs to the ABC transporter superfamily.

It is found in the cell inner membrane. In terms of biological role, probably part of a binding-protein-dependent transport system for an amino acid. Probably responsible for energy coupling to the transport system. This is Probable amino-acid ABC transporter ATP-binding protein HI_1078 from Haemophilus influenzae (strain ATCC 51907 / DSM 11121 / KW20 / Rd).